Reading from the N-terminus, the 459-residue chain is Argininosuccinate lyase (459 aa).

It belongs to the lyase 1 family. Argininosuccinate lyase subfamily.

Its subcellular location is the cytoplasm. The enzyme catalyses 2-(N(omega)-L-arginino)succinate = fumarate + L-arginine. It participates in amino-acid biosynthesis; L-arginine biosynthesis; L-arginine from L-ornithine and carbamoyl phosphate: step 3/3. In Photorhabdus laumondii subsp. laumondii (strain DSM 15139 / CIP 105565 / TT01) (Photorhabdus luminescens subsp. laumondii), this protein is Argininosuccinate lyase.